Consider the following 232-residue polypeptide: MAKLSKRARLIREKVDVTKEYDINEAVSLLKEFATANFRESVDVAVNLGIDARKSDQNVRGATVLPNGTGREVRVAVFTQGENAEKAKAAGADIVGMEDLAAQVKAGEMNFDVVIASPDAMRVVGQLGQILGPRGLMPNPKVGTVTPDVAGAVKNAKSGQIRYRNDKNGIIHTTIGKADFEPAQLQENLESLLEALKKAKPANAKGQYLKKVSLSTTMGAGVVVNQATLTQA.

Belongs to the universal ribosomal protein uL1 family. In terms of assembly, part of the 50S ribosomal subunit.

Functionally, binds directly to 23S rRNA. The L1 stalk is quite mobile in the ribosome, and is involved in E site tRNA release. In terms of biological role, protein L1 is also a translational repressor protein, it controls the translation of the L11 operon by binding to its mRNA. This is Large ribosomal subunit protein uL1 from Colwellia psychrerythraea (strain 34H / ATCC BAA-681) (Vibrio psychroerythus).